A 149-amino-acid polypeptide reads, in one-letter code: Calmodulin-1 (149 aa).

Ala-2 carries the post-translational modification N-acetylalanine. 4 consecutive EF-hand domains span residues 8–43, 44–79, 81–116, and 117–149; these read EQIAEFKEAFSLFDKDGDGTITTKELGTVMRSLGQN, PTEAELQDMINEVDADGNGTIDFPEFLTMMARKMKD, DSEEEIREAFRVFDKDGNGFISAAELRHVMTNLGEK, and LTDEEVDEMIREADIDGDGQVNYEEFVTMMTSK. Ca(2+)-binding residues include Asp-21, Asp-23, Asp-25, Thr-27, Glu-32, Asp-57, Asp-59, Asn-61, Thr-63, Glu-68, Asp-94, Asp-96, Asn-98, and Glu-105. Lys-116 is modified (N6,N6,N6-trimethyllysine). Positions 130, 132, 134, 136, and 141 each coordinate Ca(2+).

This sequence belongs to the calmodulin family.

Calmodulin mediates the control of a large number of enzymes, ion channels and other proteins by Ca(2+). Among the enzymes to be stimulated by the calmodulin-Ca(2+) complex are a number of protein kinases and phosphatases. The sequence is that of Calmodulin-1 from Branchiostoma floridae (Florida lancelet).